The sequence spans 208 residues: MVSRRVQALLEQLRAQGIQDEQVLNALAAVPREKFVDEAFEQKAWDNIALPIGQGQTISQPYMVARMTELLELTPQSRVLEIGTGSGYQTAILAHLVQHVCSVERIKGLQWQARRRLKNLDLHNVSTRHGDGWQGWQARAPFDAIIVTAAPPEIPTALMTQLDEGGILVLPVGEEHQYLKRVRRRGGEFIIDTVEAVRFVPLVKGELA.

The active site involves S59.

Belongs to the methyltransferase superfamily. L-isoaspartyl/D-aspartyl protein methyltransferase family.

The protein resides in the cytoplasm. It carries out the reaction [protein]-L-isoaspartate + S-adenosyl-L-methionine = [protein]-L-isoaspartate alpha-methyl ester + S-adenosyl-L-homocysteine. Functionally, catalyzes the methyl esterification of L-isoaspartyl residues in peptides and proteins that result from spontaneous decomposition of normal L-aspartyl and L-asparaginyl residues. It plays a role in the repair and/or degradation of damaged proteins. The polypeptide is Protein-L-isoaspartate O-methyltransferase (Shigella sonnei (strain Ss046)).